We begin with the raw amino-acid sequence, 303 residues long: 4-diphosphocytidyl-2-C-methyl-D-erythritol kinase (303 aa).

The active site involves Lys-18. 111–121 is an ATP binding site; the sequence is PVASGIGGGSA. Residue Asp-153 is part of the active site.

This sequence belongs to the GHMP kinase family. IspE subfamily.

It carries out the reaction 4-CDP-2-C-methyl-D-erythritol + ATP = 4-CDP-2-C-methyl-D-erythritol 2-phosphate + ADP + H(+). Its pathway is isoprenoid biosynthesis; isopentenyl diphosphate biosynthesis via DXP pathway; isopentenyl diphosphate from 1-deoxy-D-xylulose 5-phosphate: step 3/6. Catalyzes the phosphorylation of the position 2 hydroxy group of 4-diphosphocytidyl-2C-methyl-D-erythritol. This chain is 4-diphosphocytidyl-2-C-methyl-D-erythritol kinase, found in Sinorhizobium medicae (strain WSM419) (Ensifer medicae).